The sequence spans 387 residues: Monopolar spindle protein 2 (387 aa).

The stretch at 117–232 forms a coiled coil; sequence MNLNSPSKFL…NSSRTSDPGS (116 aa). The disordered stretch occupies residues 216-235; sequence RQVEDNQNSSRTSDPGSPLV. The segment covering 220 to 230 has biased composition (polar residues); the sequence is DNQNSSRTSDP. Residues 311-327 traverse the membrane as a helical segment; the sequence is IRIIVCFALLAGVLPYI.

This sequence belongs to the MPS2 family. As to quaternary structure, interacts with BBP1, MPS3, and SPC24.

It localises to the nucleus membrane. The protein resides in the cytoplasm. Its subcellular location is the cytoskeleton. It is found in the microtubule organizing center. The protein localises to the spindle pole body. Functionally, component of the spindle pole body (SPB) required for insertion of the nascent SPB into the nuclear envelope and for the proper execution of spindle pole body (SPB) duplication. The sequence is that of Monopolar spindle protein 2 (MPS2) from Saccharomyces cerevisiae (strain ATCC 204508 / S288c) (Baker's yeast).